The primary structure comprises 398 residues: Acetate kinase (398 aa).

Asn7 serves as a coordination point for Mg(2+). Lys14 lines the ATP pocket. Residue Arg85 participates in substrate binding. Catalysis depends on Asp142, which acts as the Proton donor/acceptor. ATP-binding positions include His202–Gly206, Asp277–Arg279, and Gly325–Asn329. Glu379 is a Mg(2+) binding site.

The protein belongs to the acetokinase family. Homodimer. Mg(2+) is required as a cofactor. Requires Mn(2+) as cofactor.

Its subcellular location is the cytoplasm. It catalyses the reaction acetate + ATP = acetyl phosphate + ADP. The protein operates within metabolic intermediate biosynthesis; acetyl-CoA biosynthesis; acetyl-CoA from acetate: step 1/2. Catalyzes the formation of acetyl phosphate from acetate and ATP. Can also catalyze the reverse reaction. The protein is Acetate kinase of Deinococcus radiodurans (strain ATCC 13939 / DSM 20539 / JCM 16871 / CCUG 27074 / LMG 4051 / NBRC 15346 / NCIMB 9279 / VKM B-1422 / R1).